Consider the following 186-residue polypeptide: TATA-box-binding protein F (186 aa).

2 consecutive repeat copies span residues 10 to 86 (IENV…FDDL) and 101 to 179 (VQNI…NDRL).

The protein belongs to the TBP family.

General factor that plays a role in the activation of archaeal genes transcribed by RNA polymerase. Binds specifically to the TATA box promoter element which lies close to the position of transcription initiation. This is TATA-box-binding protein F (tbpF) from Halobacterium salinarum (strain ATCC 700922 / JCM 11081 / NRC-1) (Halobacterium halobium).